Consider the following 567-residue polypeptide: Amino-acid acetyltransferase, mitochondrial (567 aa).

An N-acetyltransferase domain is found at 392 to 558; sequence KDSPQTNPLH…ARLKEYAKHI (167 aa).

This sequence belongs to the acetyltransferase family.

It is found in the mitochondrion. It carries out the reaction L-glutamate + acetyl-CoA = N-acetyl-L-glutamate + CoA + H(+). It functions in the pathway amino-acid biosynthesis; L-arginine biosynthesis; N(2)-acetyl-L-ornithine from L-glutamate: step 1/4. Functionally, N-acetylglutamate synthase involved in arginine biosynthesis. The chain is Amino-acid acetyltransferase, mitochondrial (ARG2) from Vanderwaltozyma polyspora (strain ATCC 22028 / DSM 70294 / BCRC 21397 / CBS 2163 / NBRC 10782 / NRRL Y-8283 / UCD 57-17) (Kluyveromyces polysporus).